A 67-amino-acid chain; its full sequence is Probable Sec-independent protein translocase protein TatE (67 aa).

Residues 4 to 21 (ISITKLLVVAALIVLVFG) traverse the membrane as a helical segment. The segment at 43–67 (MNDDDTSVKKSAEEDVPADKISHKE) is disordered.

It belongs to the TatA/E family. TatE subfamily.

Its subcellular location is the cell inner membrane. In terms of biological role, part of the twin-arginine translocation (Tat) system that transports large folded proteins containing a characteristic twin-arginine motif in their signal peptide across membranes. TatE shares overlapping functions with TatA. In Enterobacter lignolyticus (strain SCF1), this protein is Probable Sec-independent protein translocase protein TatE.